The sequence spans 301 residues: Glycine--tRNA ligase alpha subunit (301 aa).

It belongs to the class-II aminoacyl-tRNA synthetase family. As to quaternary structure, tetramer of two alpha and two beta subunits.

It is found in the cytoplasm. It carries out the reaction tRNA(Gly) + glycine + ATP = glycyl-tRNA(Gly) + AMP + diphosphate. This is Glycine--tRNA ligase alpha subunit from Shewanella baltica (strain OS223).